Here is a 106-residue protein sequence, read N- to C-terminus: Large ribosomal subunit protein eL42A (106 aa).

K40 is modified (N6-methyllysine; by RKM3). An N6-methyllysine; by RKM4 modification is found at K55.

It belongs to the eukaryotic ribosomal protein eL42 family. As to quaternary structure, component of the large ribosomal subunit (LSU). Mature yeast ribosomes consist of a small (40S) and a large (60S) subunit. The 40S small subunit contains 1 molecule of ribosomal RNA (18S rRNA) and 33 different proteins (encoded by 57 genes). The large 60S subunit contains 3 rRNA molecules (25S, 5.8S and 5S rRNA) and 46 different proteins (encoded by 81 genes). In terms of processing, in wild-type cells, 78% of L42 is monomethylated at both Lys-40 and Lys-55, and 22% are a mixture of species with either residue monomethylated.

It localises to the cytoplasm. In terms of biological role, component of the ribosome, a large ribonucleoprotein complex responsible for the synthesis of proteins in the cell. The small ribosomal subunit (SSU) binds messenger RNAs (mRNAs) and translates the encoded message by selecting cognate aminoacyl-transfer RNA (tRNA) molecules. The large subunit (LSU) contains the ribosomal catalytic site termed the peptidyl transferase center (PTC), which catalyzes the formation of peptide bonds, thereby polymerizing the amino acids delivered by tRNAs into a polypeptide chain. The nascent polypeptides leave the ribosome through a tunnel in the LSU and interact with protein factors that function in enzymatic processing, targeting, and the membrane insertion of nascent chains at the exit of the ribosomal tunnel. This chain is Large ribosomal subunit protein eL42A, found in Saccharomyces cerevisiae (strain ATCC 204508 / S288c) (Baker's yeast).